We begin with the raw amino-acid sequence, 333 residues long: Probable cytosolic iron-sulfur protein assembly protein ciao1-B (333 aa).

WD repeat units follow at residues 14–53, 59–98, 103–142, 148–187, 192–231, 246–285, and 297–333; these read HPDS…WECK, GHQR…FECL, GHEN…EYEC, SHTQ…WECR, GHTS…GGQE, FHGR…DPDQ, and AHTQ…QSGV.

The protein belongs to the WD repeat CIA1 family. As to quaternary structure, component of the CIA complex.

Its function is as follows. Key component of the cytosolic iron-sulfur protein assembly (CIA) complex, a multiprotein complex that mediates the incorporation of iron-sulfur cluster into extramitochondrial Fe/S proteins. This is Probable cytosolic iron-sulfur protein assembly protein ciao1-B (ciao1b) from Salmo salar (Atlantic salmon).